The chain runs to 347 residues: tRNA N6-adenosine threonylcarbamoyltransferase (347 aa).

Fe cation contacts are provided by H111 and H115. Residues 134–138 (LISGG), D167, G180, and N277 contribute to the substrate site. D305 is a binding site for Fe cation.

This sequence belongs to the KAE1 / TsaD family. Fe(2+) serves as cofactor.

The protein localises to the cytoplasm. It catalyses the reaction L-threonylcarbamoyladenylate + adenosine(37) in tRNA = N(6)-L-threonylcarbamoyladenosine(37) in tRNA + AMP + H(+). Its function is as follows. Required for the formation of a threonylcarbamoyl group on adenosine at position 37 (t(6)A37) in tRNAs that read codons beginning with adenine. Is involved in the transfer of the threonylcarbamoyl moiety of threonylcarbamoyl-AMP (TC-AMP) to the N6 group of A37, together with TsaE and TsaB. TsaD likely plays a direct catalytic role in this reaction. This Actinobacillus pleuropneumoniae serotype 5b (strain L20) protein is tRNA N6-adenosine threonylcarbamoyltransferase.